Consider the following 252-residue polypeptide: Uridylate kinase (252 aa).

An ATP-binding site is contributed by 23–26 (KLSG). Gly-65 provides a ligand contact to UMP. Gly-66 and Arg-70 together coordinate ATP. UMP contacts are provided by residues Asp-85 and 146–153 (LGAPFFST). ATP is bound by residues Thr-173, Gln-174, Tyr-179, and Asp-182.

It belongs to the UMP kinase family. Homohexamer.

Its subcellular location is the cytoplasm. The catalysed reaction is UMP + ATP = UDP + ADP. Its pathway is pyrimidine metabolism; CTP biosynthesis via de novo pathway; UDP from UMP (UMPK route): step 1/1. Its activity is regulated as follows. Inhibited by UTP. Catalyzes the reversible phosphorylation of UMP to UDP. This chain is Uridylate kinase, found in Thermobifida fusca (strain YX).